Consider the following 491-residue polypeptide: Anthranilate synthase component 1 (491 aa).

Residues S49 and 271 to 273 (PYL) each bind L-tryptophan. Residue 306–307 (GT) coordinates chorismate. A Mg(2+)-binding site is contributed by E333. Chorismate contacts are provided by residues Y421, R441, 455 to 457 (GAG), and G457. A Mg(2+)-binding site is contributed by E470.

This sequence belongs to the anthranilate synthase component I family. As to quaternary structure, heterotetramer consisting of two non-identical subunits: a beta subunit (TrpG) and a large alpha subunit (TrpE). The cofactor is Mg(2+).

It catalyses the reaction chorismate + L-glutamine = anthranilate + pyruvate + L-glutamate + H(+). It participates in amino-acid biosynthesis; L-tryptophan biosynthesis; L-tryptophan from chorismate: step 1/5. Feedback inhibited by tryptophan. Part of a heterotetrameric complex that catalyzes the two-step biosynthesis of anthranilate, an intermediate in the biosynthesis of L-tryptophan. In the first step, the glutamine-binding beta subunit (TrpG) of anthranilate synthase (AS) provides the glutamine amidotransferase activity which generates ammonia as a substrate that, along with chorismate, is used in the second step, catalyzed by the large alpha subunit of AS (TrpE) to produce anthranilate. In the absence of TrpG, TrpE can synthesize anthranilate directly from chorismate and high concentrations of ammonia. This chain is Anthranilate synthase component 1 (trpE), found in Neisseria meningitidis serogroup C / serotype 2a (strain ATCC 700532 / DSM 15464 / FAM18).